Consider the following 450-residue polypeptide: uncharacterized protein (450 aa).

The span at 387 to 416 shows a compositional bias: basic and acidic residues; sequence ELDEKNNNKEENKNQDLHEPKESSSEDLLK. A disordered region spans residues 387–439; it reads ELDEKNNNKEENKNQDLHEPKESSSEDLLKRLNNLKINTNEGPVQDNENHDNE.

This is an uncharacterized protein from Saccharomyces cerevisiae (strain ATCC 204508 / S288c) (Baker's yeast).